The following is a 140-amino-acid chain: Transcription antitermination protein NusB (140 aa).

This sequence belongs to the NusB family.

In terms of biological role, involved in transcription antitermination. Required for transcription of ribosomal RNA (rRNA) genes. Binds specifically to the boxA antiterminator sequence of the ribosomal RNA (rrn) operons. The protein is Transcription antitermination protein NusB of Elusimicrobium minutum (strain Pei191).